We begin with the raw amino-acid sequence, 279 residues long: Putative colanic acid biosynthesis glycosyl transferase WcaA (279 aa).

It to R.meliloti ExoO.

It functions in the pathway slime biogenesis; slime polysaccharide biosynthesis. This Escherichia coli (strain K12) protein is Putative colanic acid biosynthesis glycosyl transferase WcaA (wcaA).